We begin with the raw amino-acid sequence, 61 residues long: ATP synthase F(0) complex subunit 8 (61 aa).

A helical membrane pass occupies residues 10 to 32 (FMILSSTWLIYTIILQPKILSHL).

The protein belongs to the ATPase protein 8 family. As to quaternary structure, component of the ATP synthase complex composed at least of ATP5F1A/subunit alpha, ATP5F1B/subunit beta, ATP5MC1/subunit c (homooctomer), MT-ATP6/subunit a, MT-ATP8/subunit 8, ATP5ME/subunit e, ATP5MF/subunit f, ATP5MG/subunit g, ATP5MK/subunit k, ATP5MJ/subunit j, ATP5F1C/subunit gamma, ATP5F1D/subunit delta, ATP5F1E/subunit epsilon, ATP5PF/subunit F6, ATP5PB/subunit b, ATP5PD/subunit d, ATP5PO/subunit OSCP. ATP synthase complex consists of a soluble F(1) head domain (subunits alpha(3) and beta(3)) - the catalytic core - and a membrane F(0) domain - the membrane proton channel (subunits c, a, 8, e, f, g, k and j). These two domains are linked by a central stalk (subunits gamma, delta, and epsilon) rotating inside the F1 region and a stationary peripheral stalk (subunits F6, b, d, and OSCP).

The protein resides in the mitochondrion membrane. Subunit 8, of the mitochondrial membrane ATP synthase complex (F(1)F(0) ATP synthase or Complex V) that produces ATP from ADP in the presence of a proton gradient across the membrane which is generated by electron transport complexes of the respiratory chain. ATP synthase complex consist of a soluble F(1) head domain - the catalytic core - and a membrane F(1) domain - the membrane proton channel. These two domains are linked by a central stalk rotating inside the F(1) region and a stationary peripheral stalk. During catalysis, ATP synthesis in the catalytic domain of F(1) is coupled via a rotary mechanism of the central stalk subunits to proton translocation. In vivo, can only synthesize ATP although its ATP hydrolase activity can be activated artificially in vitro. Part of the complex F(0) domain. The polypeptide is ATP synthase F(0) complex subunit 8 (Chelonia mydas (Green sea-turtle)).